Reading from the N-terminus, the 101-residue chain is Urease subunit beta (101 aa).

It belongs to the urease beta subunit family. In terms of assembly, heterotrimer of UreA (gamma), UreB (beta) and UreC (alpha) subunits. Three heterotrimers associate to form the active enzyme.

The protein localises to the cytoplasm. It carries out the reaction urea + 2 H2O + H(+) = hydrogencarbonate + 2 NH4(+). Its pathway is nitrogen metabolism; urea degradation; CO(2) and NH(3) from urea (urease route): step 1/1. The sequence is that of Urease subunit beta from Bradyrhizobium sp. (strain BTAi1 / ATCC BAA-1182).